The primary structure comprises 489 residues: Cryptochrome DASH (489 aa).

One can recognise a Photolyase/cryptochrome alpha/beta domain in the interval 6-140 (PTVLVWFRND…EAKGYWGSTL (135 aa)).

This sequence belongs to the DNA photolyase class-1 family. It depends on FAD as a cofactor. Requires (6R)-5,10-methylene-5,6,7,8-tetrahydrofolate as cofactor.

Its function is as follows. May have a photoreceptor function. Binds DNA; represses transcription of at least 8 genes, including slr0364 and slr1866. Does not encode a DNA photolyase function. Its disruption does not affect circadian rhythm. The sequence is that of Cryptochrome DASH (cry) from Synechocystis sp. (strain ATCC 27184 / PCC 6803 / Kazusa).